A 355-amino-acid chain; its full sequence is Guanine nucleotide-binding protein G(i) subunit alpha (355 aa).

Gly2 is lipidated: N-myristoyl glycine. A lipid anchor (S-palmitoyl cysteine) is attached at Cys3. The region spanning 33–355 is the G-alpha domain; sequence REVKLLLLGA…KNNLKDCGLF (323 aa). Positions 36-49 are G1 motif; it reads KLLLLGAGESGKST. Residues 41 to 48, 176 to 182, 201 to 205, 270 to 273, and Ala327 contribute to the GTP site; these read GAGESGKS, LRTRVKT, DVGGQ, and NKKD. 2 residues coordinate Mg(2+): Ser48 and Thr182. Residues 174 to 182 are G2 motif; it reads DVLRTRVKT. A G3 motif region spans residues 197 to 206; sequence FKLFDVGGQR. The interval 266–273 is G4 motif; that stretch reads ILFLNKKD. Residues 325–330 are G5 motif; the sequence is TCATDT.

This sequence belongs to the G-alpha family. G(i/o/t/z) subfamily. As to quaternary structure, g proteins are composed of 3 units; alpha, beta and gamma. The alpha chain contains the guanine nucleotide binding site.

Functionally, guanine nucleotide-binding proteins (G proteins) are involved as modulators or transducers in various transmembrane signaling systems. In Homarus americanus (American lobster), this protein is Guanine nucleotide-binding protein G(i) subunit alpha.